A 196-amino-acid chain; its full sequence is Pyridoxine/pyridoxamine 5'-phosphate oxidase (196 aa).

Lysine 49 contacts substrate. The FMN site is built by lysine 66 and glutamine 88. Substrate is bound by residues tyrosine 106, arginine 110, and serine 114. Residues 123–124 and tryptophan 168 contribute to the FMN site; that span reads QS. Substrate is bound at residue 174–176; the sequence is RLH. Arginine 178 lines the FMN pocket.

This sequence belongs to the pyridoxamine 5'-phosphate oxidase family. Homodimer. FMN serves as cofactor.

It carries out the reaction pyridoxamine 5'-phosphate + O2 + H2O = pyridoxal 5'-phosphate + H2O2 + NH4(+). The enzyme catalyses pyridoxine 5'-phosphate + O2 = pyridoxal 5'-phosphate + H2O2. It functions in the pathway cofactor metabolism; pyridoxal 5'-phosphate salvage; pyridoxal 5'-phosphate from pyridoxamine 5'-phosphate: step 1/1. The protein operates within cofactor metabolism; pyridoxal 5'-phosphate salvage; pyridoxal 5'-phosphate from pyridoxine 5'-phosphate: step 1/1. Functionally, catalyzes the oxidation of either pyridoxine 5'-phosphate (PNP) or pyridoxamine 5'-phosphate (PMP) into pyridoxal 5'-phosphate (PLP). The polypeptide is Pyridoxine/pyridoxamine 5'-phosphate oxidase (Bdellovibrio bacteriovorus (strain ATCC 15356 / DSM 50701 / NCIMB 9529 / HD100)).